The sequence spans 461 residues: V-type ATP synthase beta chain (461 aa).

Belongs to the ATPase alpha/beta chains family.

Its function is as follows. Produces ATP from ADP in the presence of a proton gradient across the membrane. The V-type beta chain is a regulatory subunit. This Clostridium botulinum (strain Kyoto / Type A2) protein is V-type ATP synthase beta chain.